We begin with the raw amino-acid sequence, 1033 residues long: Potassium-transporting ATPase alpha chain 2 (1033 aa).

The Cytoplasmic portion of the chain corresponds to 1 to 96 (MRRKTLEIYS…NALSPPKQTP (96 aa)). The helical transmembrane segment at 97–117 (EIIKFLKQMIGGFSILLWVGA) threads the bilayer. Over 118–140 (ILCWIAYGIQYASNQSGSLDNVY) the chain is Lumenal. A helical membrane pass occupies residues 141 to 161 (LGVVLALVVILTGIFAYYQEA). The Cytoplasmic portion of the chain corresponds to 162-297 (KSTNIMSSFS…NEKTPIATEI (136 aa)). Residues 298 to 317 (EHFVHIVAGVAVSIGILFFI) traverse the membrane as a helical segment. At 318–329 (IAVSLKYRVLDS) the chain is on the lumenal side. Residues 330 to 347 (IIFLIGIIVANVPEGLLA) form a helical membrane-spanning segment. Residues 348-781 (TVTVTLSLTA…EEGRLIFDNL (434 aa)) lie on the Cytoplasmic side of the membrane. The 4-aspartylphosphate intermediate role is filled by D385. Mg(2+)-binding residues include D726 and D730. Residues 782–801 (KKTIAYTLTKNIAELCPFLV) form a helical membrane-spanning segment. Residues 802–811 (YIIVGLPLPI) lie on the Lumenal side of the membrane. Residues 812–832 (GTITILFIDLGTDIIPSIALA) form a helical membrane-spanning segment. The Cytoplasmic portion of the chain corresponds to 833–852 (YEKVESDIMNRKPRHKKKDR). The chain crosses the membrane as a helical span at residues 853–875 (LVNHQLAIYSYLHIGLMQALGAF). The Lumenal portion of the chain corresponds to 876-927 (LVYFTVYAQQGFWPTSLIQLRVKWEQDYVNDLEDSYGQQWTRYQRKYLEWTG). Residues 928 to 947 (YTAFFVGIMVQQIADLIIRK) form a helical membrane-spanning segment. Residues 948–961 (TRRNSIFQQGLFRN) are Cytoplasmic-facing. Position 952 is a phosphoserine; by PKA (S952). A helical membrane pass occupies residues 962 to 980 (KVIWVGITSQIIVALILSC). The Lumenal portion of the chain corresponds to 981 to 995 (GLGSITALNFTMLRV). The chain crosses the membrane as a helical span at residues 996-1016 (QYWFVAVPHAILIWVYDEVRK). The Cytoplasmic portion of the chain corresponds to 1017-1033 (LFLRLYPGSWWDKNMYY).

This sequence belongs to the cation transport ATPase (P-type) (TC 3.A.3) family. Type IIC subfamily. Composed of two subunits: alpha (catalytic) and beta. As to expression, found in skin, kidney and distal colon.

The protein localises to the membrane. The enzyme catalyses K(+)(out) + ATP + H2O + H(+)(in) = K(+)(in) + ADP + phosphate + 2 H(+)(out). Its function is as follows. Catalyzes the hydrolysis of ATP coupled with the exchange of H(+) and K(+) ions across the plasma membrane. Responsible for potassium absorption in various tissues. The sequence is that of Potassium-transporting ATPase alpha chain 2 (ATP12A) from Cavia porcellus (Guinea pig).